The primary structure comprises 117 residues: Large ribosomal subunit protein bL19 (117 aa).

It belongs to the bacterial ribosomal protein bL19 family.

This protein is located at the 30S-50S ribosomal subunit interface and may play a role in the structure and function of the aminoacyl-tRNA binding site. The sequence is that of Large ribosomal subunit protein bL19 from Photorhabdus laumondii subsp. laumondii (strain DSM 15139 / CIP 105565 / TT01) (Photorhabdus luminescens subsp. laumondii).